The primary structure comprises 556 residues: Urocanate hydratase (556 aa).

NAD(+) contacts are provided by residues 52–53 (GG), Q130, 176–178 (GMG), E196, R201, 242–243 (NA), 263–267 (QTSAH), 273–274 (YL), and Y322. The active site involves C410. NAD(+) is bound at residue G492.

This sequence belongs to the urocanase family. NAD(+) serves as cofactor.

The protein resides in the cytoplasm. The enzyme catalyses 4-imidazolone-5-propanoate = trans-urocanate + H2O. The protein operates within amino-acid degradation; L-histidine degradation into L-glutamate; N-formimidoyl-L-glutamate from L-histidine: step 2/3. Catalyzes the conversion of urocanate to 4-imidazolone-5-propionate. The sequence is that of Urocanate hydratase from Shewanella sp. (strain MR-7).